A 256-amino-acid polypeptide reads, in one-letter code: Type III pantothenate kinase (256 aa).

ATP is bound at residue 6–13; that stretch reads DAGNSRIK. Residues tyrosine 90 and 97 to 100 each bind substrate; that span reads GSDR. Aspartate 99 acts as the Proton acceptor in catalysis. Residue threonine 123 coordinates ATP. Threonine 187 contributes to the substrate binding site.

Belongs to the type III pantothenate kinase family. In terms of assembly, homodimer. It depends on NH4(+) as a cofactor. K(+) serves as cofactor.

It is found in the cytoplasm. It catalyses the reaction (R)-pantothenate + ATP = (R)-4'-phosphopantothenate + ADP + H(+). Its pathway is cofactor biosynthesis; coenzyme A biosynthesis; CoA from (R)-pantothenate: step 1/5. Its function is as follows. Catalyzes the phosphorylation of pantothenate (Pan), the first step in CoA biosynthesis. This Burkholderia mallei (strain ATCC 23344) protein is Type III pantothenate kinase.